A 2412-amino-acid polypeptide reads, in one-letter code: MEQTLAQAVSRRGKTNTPMAEERKPFSPMNFSANFVAPELFYSANVRKIKNIFRERSTTRFLDAISSDFELVAFLTLSPAHLMQLETTLRQEIRSCVVPIVTSDASFETVAVIKTALDGMRFHFGHTTLEKGWMSMMRHAESCLQESSSSAVNDLQMQIKRVGSLLLSGKNRVESCELSVLNLTARRFRIEYGLNGTYFGEHVAMLLDLKRYIYGTVPKEFCWAKTKKHSLFTTPKWIKRTPIDCFLFCLRVIPILHRFGVAISLLYWSCVAALNFPAFMAFLFKRQFAKYLAHSFAKHSIYFIFLTIIAILWSFRTFASQKPKIVLQARSTAEKEKKLMMILASVVGITYLFDYDIAEALGNCLHKISRLSSYLLDDHQGIASRMFGASYGLQAGDSAEDAVTTIISDLLSVTFKIVDEDASQGTVEDASETTFHSWVGVNTLAGRNMSRPLQYDVNKTYALTPQNVQLQARAMADANNCWSMVVGHTGSGKSTYLPVQYSNYLSTKSDRRQQILICEPTQAATENVCAGVAANLGRAVYGRHEGWSRMGDHCIQVMTYGSALQCHAMDPSFISTFDAIFLDEAHDVKEHSLVFESICDTFKSVRKFYVSATPRDGSVCPEAARKYPLHVETSVCDSYRKFIAAQGGGDLLDISKHDTALVFLAGRPECIKAANAWNASVTGEKRAFPLSSDNFATDFSMLTERLKTHKTIIFTTNIIETGVTLSVDCVVDFGHTMRPCLDLNQKSLRLDRRRVTRNERQQRIGRAGRLKDGYAIVCGDVDRAVNVISPDVLYGAALLSFKHNVPFYMNETFESSWLEGVTKAQADTMTIFKLPIFLTRDLINADGSVAREFLDVLKKHQFTTSDIKQAPSVTAKHIFPTWASYFSLHQALHYGDDKDEIPHELRYARVPFSVTTLSKFDWPALALACEKHRASMSNVFAGIEEPARVVTLQTNPANIQASITHLTHMSKNYKTLIENNQHVRQSMMTNVMFKWFSSTRITKDLDRNLRRCTDNLSVVEATLSSLRQILAGNTQVHATPHMQSTLEDIIELQASDTLTEESLANALGIFVPKCNLFLLLATKGFKLVYVVCILLLVNLVYTGLRKWREHLKQKGSNEILTNTMPVSEGGEILAEVMKMEPKMRKNIKRDMDAAVESKLCGFTFVFPDDDKIGLEGKGNKYRPREDARLMYSTREDATFDAWNEKAKERRKKVTDKAEPELRRAYEKRPYFNFYDLQTDSNILEAIFYTTEGDEFFRTADPNRDMNLVADKLRSFLDTKLVVGHHQRKLLEETANVVIKDTKGTAHKMEISQHDPDFLKQNGSGKVGYPEHRGQFRQEGVAVTGDYDLEAEFGTDTDEISFGASTGILLSQVGVDVATRVGRICIGTFNMNCYFYSDWILVPGHLQDRSGNVTIQFPDQTVQTTTDALNANGVKRFYGLDVIAIRRPAILRPRTKLVKAFAIEEPVIAQMVFVDAQGVRKFTQSDWARKEENSGRWSHKISTVLGMCGCPVLDVGKNRLIGIHVATNYTKKRNEFQPFTQEVVDFINGPGTKIPYCPWVFDRPACGYSSHNALFEKPTTLADVIHMQASDGLHNINNAIEGFGSSLKGQLVSPPTESTRQRFDKLFGSGSFELIGQMNKGLIDKHVIVGENDDVYDFMREHPTFTWLKDFMNEYAPSVLSYSAYYKDLCKYNRAKHVLTYNPEELHCATKGLIKMLEDAGLTQGSVRTPQQVVSDIQWNTSAGPSYQGKKRDLCAHLSDDEVLHLAEVCRQQFLEGKSTGVWNGSLKAELRTIEKVEAEKTRVFTASPITSLFAMKFYVDDFNKKFYATNLKAPHTVGINKFGRGWEKLHDKLNRPGWLHGSGDGSRFDSSIDPFFFDVVKTIRKHFLPSEHHKAIDLIYDEILNTTICLANGMVIRKNVGNNSGQPSTVVDNTLVLMTAFLYAYIHKTGDRELALLNERFIFVCNGDDNKFAISPQFDEEFGHDFSPELVELGLTYEFDDITSDICENPYMSLTMVKTPFGVGFSLPVERIIAIMQWSKKGGVLHSYLAGISAIYESFNTPKLFKSIYAYLLWLTEEHEAEILAAMTQSSTALPIPSMLDVYRLHYGDDEIWLQAADPLTDAQKEAAHTAAADRARLDLADADRRRKVEADRVEAARVKKAADAVLKPVTLTATRMPTEDDGKLKTPSGARIPSSAADGNWSVPATKQVNAGLTLKIPLNKLKSVPKSVMEHNNSVALESELKAWTDAVRTSLGITTDEAWIDALIPFIGWCCNNGTSDKHAENQVMQIDSGKGAVTEMSLSPFIVHARMNGGLRRIMRNYSDETVLLITNNKLVAHWSMKHGASANAKYAFDFFVPRSWMNPQDIEVSKQARLAALGTGTYNTMLTSDTTNLRKTTNHRVLDSDGHPELT.

The segment at 1–23 (MEQTLAQAVSRRGKTNTPMAEER) is disordered. Positions 474-632 (AMADANNCWS…AARKYPLHVE (159 aa)) constitute a Helicase ATP-binding domain. Residue 487-494 (GHTGSGKS) participates in ATP binding. The Helicase C-terminal domain occupies 647–813 (GGGDLLDISK…NVPFYMNETF (167 aa)). O-(5'-phospho-RNA)-tyrosine is present on Tyr1234. The 216-residue stretch at 1359-1574 (ISFGASTGIL…CGYSSHNALF (216 aa)) folds into the Peptidase C4 domain. Residues His1404, Asp1440, and Cys1507 each act as for nuclear inclusion protein A activity in the active site. One can recognise a RdRp catalytic domain in the interval 1858 to 1982 (WLHGSGDGSR…AISPQFDEEF (125 aa)). Residues 2178–2202 (PTEDDGKLKTPSGARIPSSAADGNW) form a disordered region.

Belongs to the bymoviruses polyprotein 1 family. In terms of processing, VPg is uridylylated by the polymerase and is covalently attached to the 5'-end of the genomic RNA. This uridylylated form acts as a nucleotide-peptide primer for the polymerase. The viral RNA1 of bymoviruses is expressed as a single polyprotein which undergoes post-translational proteolytic processing by the main proteinase NIa-pro resulting in the production of at least eight individual proteins.

It localises to the host cytoplasmic vesicle. The protein resides in the virion. The enzyme catalyses RNA(n) + a ribonucleoside 5'-triphosphate = RNA(n+1) + diphosphate. The catalysed reaction is Hydrolyzes glutaminyl bonds, and activity is further restricted by preferences for the amino acids in P6 - P1' that vary with the species of potyvirus, e.g. Glu-Xaa-Xaa-Tyr-Xaa-Gln-|-(Ser or Gly) for the enzyme from tobacco etch virus. The natural substrate is the viral polyprotein, but other proteins and oligopeptides containing the appropriate consensus sequence are also cleaved.. Functionally, indispensable for virus replication. Its function is as follows. Mediates the cap-independent, EIF4E-dependent translation of viral genomic RNAs. Binds to the cap-binding site of host EIF4E and thus interferes with the host EIF4E-dependent mRNA export and translation. VPg-RNA directly binds EIF4E and is a template for transcription. Also forms trimeric complexes with EIF4E-EIF4G, which are templates for translation. In terms of biological role, has RNA-binding and proteolytic activities. An RNA-dependent RNA polymerase that plays an essential role in the virus replication. The chain is Genome polyprotein 1 from Hordeum vulgare (Barley).